The chain runs to 272 residues: MNPAFLKASAMPDVQSSRDERALPIEQVGIRGVRHPLMIRSNTGNFPSVGNFEMDVALPAHVKGTHMSRFMALLQKQDEAIDSTTVVALVRDMLPLLDAKEGHVQFTYTHFVKKAAPVSGVESLMDYEVTWMATAKQNDAGSVEVELGLRAQVPVMSLCPCSKEISEFGAHNQRSHVTMTVVLDTQTKMTVEDLVSAAEREASSELWGLLKRPDEKWVTERSYSNPKFVEDLVRDVAGRLKADTRIQSFVVDAENFESIHNHSAFARISHKK.

Belongs to the GTP cyclohydrolase IV family.

The enzyme catalyses GTP + H2O = 7,8-dihydroneopterin 3'-triphosphate + formate + H(+). The protein operates within cofactor biosynthesis; 7,8-dihydroneopterin triphosphate biosynthesis; 7,8-dihydroneopterin triphosphate from GTP: step 1/1. Functionally, converts GTP to 7,8-dihydroneopterin triphosphate. The polypeptide is GTP cyclohydrolase FolE2 (Polynucleobacter asymbioticus (strain DSM 18221 / CIP 109841 / QLW-P1DMWA-1) (Polynucleobacter necessarius subsp. asymbioticus)).